The chain runs to 269 residues: Monofunctional glycosyltransferase (269 aa).

A helical membrane pass occupies residues 46–66 (ILLTILIIIALFIGIMYFLST).

Belongs to the glycosyltransferase 51 family.

It is found in the cell membrane. The enzyme catalyses [GlcNAc-(1-&gt;4)-Mur2Ac(oyl-L-Ala-gamma-D-Glu-L-Lys-D-Ala-D-Ala)](n)-di-trans,octa-cis-undecaprenyl diphosphate + beta-D-GlcNAc-(1-&gt;4)-Mur2Ac(oyl-L-Ala-gamma-D-Glu-L-Lys-D-Ala-D-Ala)-di-trans,octa-cis-undecaprenyl diphosphate = [GlcNAc-(1-&gt;4)-Mur2Ac(oyl-L-Ala-gamma-D-Glu-L-Lys-D-Ala-D-Ala)](n+1)-di-trans,octa-cis-undecaprenyl diphosphate + di-trans,octa-cis-undecaprenyl diphosphate + H(+). It participates in cell wall biogenesis; peptidoglycan biosynthesis. Peptidoglycan polymerase that catalyzes glycan chain elongation using lipid-linked disaccharide-pentapeptide as the substrate. The sequence is that of Monofunctional glycosyltransferase from Staphylococcus aureus (strain JH1).